The primary structure comprises 78 residues: Defensin-like protein 287 (78 aa).

The first 24 residues, 1 to 24, serve as a signal peptide directing secretion; that stretch reads MNNLRVIMSVLLAVLVFTATVSES. Cystine bridges form between C39–C59, C45–C64, and C51–C66.

It belongs to the DEFL family.

The protein localises to the secreted. This is Defensin-like protein 287 from Arabidopsis thaliana (Mouse-ear cress).